The chain runs to 353 residues: Protein Wnt-11b-2 (353 aa).

A signal peptide spans 1–22; the sequence is MALIRHCVTLLLILCCSRLCGA. N-linked (GlcNAc...) asparagine glycosylation is found at asparagine 31, asparagine 38, and asparagine 88. Cystine bridges form between cysteine 78-cysteine 89, cysteine 128-cysteine 136, cysteine 138-cysteine 155, cysteine 208-cysteine 222, and cysteine 210-cysteine 217. Serine 214 carries O-palmitoleoyl serine; by PORCN lipidation. Sulfotyrosine occurs at positions 274 and 281. Intrachain disulfides connect cysteine 282–cysteine 313, cysteine 298–cysteine 308, cysteine 312–cysteine 352, cysteine 328–cysteine 343, cysteine 330–cysteine 340, and cysteine 335–cysteine 336. Asparagine 299 carries an N-linked (GlcNAc...) asparagine glycan.

This sequence belongs to the Wnt family. In terms of assembly, homodimer. Secreted homodimers form a complex with wnt5a homodimers; tyrosine sulfation of both wnt11 and wnt5a by tpst1 is required for this interaction. Interacts with the transmembrane receptor fzd7/fz7. Interacts with lrp6 and ryk. Interacts with tdgf1/frl1. Interacts weakly with frzb1 and strongly with frzb2/crescent. Interaction with frzb2/crescent antagonizes wnt11 function in the neuroectoderm, but enhances it in mesodermal tissue. In terms of processing, glycosylation is required for protein secretion. Post-translationally, palmitoleoylation is required for efficient binding to frizzled receptors. Depalmitoleoylation leads to Wnt signaling pathway inhibition.

Its subcellular location is the secreted. It localises to the extracellular space. The protein localises to the extracellular matrix. Functionally, ligand for the frizzled7 transmembrane receptor. Primarily acts via non-canonical Wnt pathways mediated by either Ca(2+) and PKC, or by JNK and dvl2/dsh. Depending on the cellular context, can also signal via the canonical Wnt pathway mediated by beta-catenin and dvl2/dsh. May also inhibit canonical Wnt signaling. Maternally initiates dorsal/ventral axis formation by a canonical route, which signals via lrp6. In a complex with wnt5a, activates the canonical and non-canonical processes involved in axis formation. In the non-canonical pathway, acts through fzd7/fz7 to induce phosphorylation of dvl2/dsh. Signals through a non-canonical Wnt pathway to regulate convergent extension movements during gastrulation. Interactions with the secreted Wnt antagonist sfrp5 to coordinate foregut development, acting via a non-canonical wnt pathway whereby sfrp5 restricts wnt11b activity to prevent inappropriate foregut formation. Mediates cardiogenesis via non-canonical Wnt signaling involving JNK-activation and PKC. Acts redundantly with wnt11/wnt11r during pronephros induction. In Xenopus tropicalis (Western clawed frog), this protein is Protein Wnt-11b-2.